The chain runs to 282 residues: Parvulin-like PPIase (282 aa).

The N-terminal stretch at 1-20 (MKKLSVIFLSVSMLSGIAFA) is a signal peptide. Residues 138–231 (KEQIKVAHIL…FGWHIIKVLE (94 aa)) form the PpiC domain.

Belongs to the PpiC/parvulin rotamase family.

Its subcellular location is the cell outer membrane. The enzyme catalyses [protein]-peptidylproline (omega=180) = [protein]-peptidylproline (omega=0). This chain is Parvulin-like PPIase (plp), found in Rickettsia conorii (strain ATCC VR-613 / Malish 7).